We begin with the raw amino-acid sequence, 524 residues long: Cytochrome P450 704B1 (524 aa).

Residues 2-22 (SLCLVIACMVTSWIFLHRWGQ) form a helical membrane-spanning segment. Residue Cys-471 coordinates heme.

The protein belongs to the cytochrome P450 family. The cofactor is heme.

It localises to the membrane. The enzyme catalyses an omega-methyl-long-chain fatty acid + reduced [NADPH--hemoprotein reductase] + O2 = an omega-hydroxy-long-chain fatty acid + oxidized [NADPH--hemoprotein reductase] + H2O + H(+). In terms of biological role, involved in pollen wall development. Catalyzes the conversion of long-chain fatty acids to the corresponding omega-hydroxylated fatty acids. Omega-hydroxylated fatty acids, together with in-chain hydroxylated fatty acids, are key monomeric aliphatic building blocks for sporopollenin synthesis during exine formation. This is Cytochrome P450 704B1 (CYP704B1) from Arabidopsis thaliana (Mouse-ear cress).